Consider the following 655-residue polypeptide: Probable inactive receptor kinase At1g48480 (655 aa).

The first 32 residues, 1–32, serve as a signal peptide directing secretion; sequence MRVFFFPNSSMAILSVFLSLLLLSLPLPSTQD. LRR repeat units follow at residues 71–95, 98–120, 122–144, 146–169, 170–192, and 194–215; these read SNRVTALRLPGVALSGDIPEGIFGN, QLRTLSLRLNALSGSLPKDLSTS, NLRHLYLQGNRFSGEIPEVLFSL, HLVRLNLASNSFTGEISSGFTNLT, KLKTLFLENNQLSGSIPDLDLPL, and QFNVSNNSLNGSIPKNLQRFES. Positions 234–260 are disordered; that stretch reads EETVPSQPTSGGNRTPPSVEGSEEKKK. The span at 237-249 shows a compositional bias: polar residues; the sequence is VPSQPTSGGNRTP. Residues 269 to 289 traverse the membrane as a helical segment; sequence IAGIVIGCVVGFALIVLILMV. The region spanning 371–646 is the Protein kinase domain; that stretch reads RASAEVLGKG…RKMENLRPYS (276 aa). Ser-373 carries the phosphoserine modification. Residue 377-385 coordinates ATP; sequence LGKGTFGTA. Thr-394 carries the phosphothreonine modification. Residue Lys-399 participates in ATP binding. Ser-450 carries the post-translational modification Phosphoserine. The residue at position 526 (Thr-526) is a Phosphothreonine. Ser-546 carries the post-translational modification Phosphoserine. Thr-622 carries the phosphothreonine modification.

The protein belongs to the protein kinase superfamily. Highly expressed in seedlings and leaves. Lower expression in roots, stems, flowers and siliques. Detected in the vascular tissues of roots, in the trichomes of young rosettes leaves and hydathodes, in the floral abscission zones, in filament apex and stomata cells of anthers, in inflorescence stems and in sepals.

The protein localises to the cell membrane. The protein is Probable inactive receptor kinase At1g48480 (RKL1) of Arabidopsis thaliana (Mouse-ear cress).